We begin with the raw amino-acid sequence, 127 residues long: Ribonuclease VapC6 (127 aa).

Positions 26 to 120 constitute a PINc domain; sequence EPQRAEFCRS…ERHLPDIRVR (95 aa). Asp86 is a Mg(2+) binding site.

This sequence belongs to the PINc/VapC protein family. Mg(2+) serves as cofactor.

Its function is as follows. Toxic component of a type II toxin-antitoxin (TA) system. An RNase. The cognate antitoxin is VapB6. This Mycobacterium tuberculosis (strain CDC 1551 / Oshkosh) protein is Ribonuclease VapC6.